Here is a 468-residue protein sequence, read N- to C-terminus: Inositol polyphosphate 5-phosphatase K (468 aa).

The interval 34–337 (VHVVTWNVAS…SDHKPVTGTF (304 aa)) is catalytic. The tract at residues 318-448 (NYVSHMAYSI…HSVVGISQPF (131 aa)) is required for interaction with GPR78 and PAK1. Positions 340 to 468 (ELNPLMSVPL…DTLYEPEPQI (129 aa)) are required for ruffle localization.

It belongs to the inositol 1,4,5-trisphosphate 5-phosphatase type II family. As to quaternary structure, interacts with GPR78; necessary for INPP5K localization at the endoplasmic reticulum. Interacts with PAK1; competes with GPR78. In terms of tissue distribution, expressed in the skeletal muscle and the eye.

The protein resides in the endoplasmic reticulum. It localises to the cytoplasm. The enzyme catalyses 1D-myo-inositol 1,4,5-trisphosphate + H2O = 1D-myo-inositol 1,4-bisphosphate + phosphate. It catalyses the reaction 1,2-dioctanoyl-sn-glycero-3-phospho-(1D-myo-inositol-3,4,5-trisphosphate) + H2O = 1,2-dioctanoyl-sn-glycero-3-phospho-(1D-myo-inositol-3,4-bisphosphate) + phosphate. It carries out the reaction 1D-myo-inositol 1,3,4,5-tetrakisphosphate + H2O = 1D-myo-inositol 1,3,4-trisphosphate + phosphate. The catalysed reaction is a 1,2-diacyl-sn-glycero-3-phospho-(1D-myo-inositol-4,5-bisphosphate) + H2O = a 1,2-diacyl-sn-glycero-3-phospho-(1D-myo-inositol 4-phosphate) + phosphate. The enzyme catalyses a 1,2-diacyl-sn-glycero-3-phospho-(1D-myo-inositol-3,4,5-trisphosphate) + H2O = a 1,2-diacyl-sn-glycero-3-phospho-(1D-myo-inositol-3,4-bisphosphate) + phosphate. Its function is as follows. Inositol 5-phosphatase which acts on inositol 1,4,5-trisphosphate, inositol 1,3,4,5-tetrakisphosphate, phosphatidylinositol 4,5-bisphosphate and phosphatidylinositol 3,4,5-trisphosphate. Has 6-fold higher affinity for phosphatidylinositol 4,5-bisphosphate than for inositol 1,4,5-trisphosphate. Negatively regulates assembly of the actin cytoskeleton. Controls insulin-dependent glucose uptake among inositol 3,4,5-trisphosphate phosphatases; therefore, is the specific regulator for insulin signaling in skeletal muscle. This is Inositol polyphosphate 5-phosphatase K from Mus musculus (Mouse).